The primary structure comprises 278 residues: Probable septum site-determining protein MinC (278 aa).

This sequence belongs to the MinC family. As to quaternary structure, interacts with MinD and FtsZ.

In terms of biological role, cell division inhibitor that blocks the formation of polar Z ring septums. Rapidly oscillates between the poles of the cell to destabilize FtsZ filaments that have formed before they mature into polar Z rings. Prevents FtsZ polymerization. This chain is Probable septum site-determining protein MinC, found in Gloeobacter violaceus (strain ATCC 29082 / PCC 7421).